The chain runs to 477 residues: Aspartyl/glutamyl-tRNA(Asn/Gln) amidotransferase subunit B (477 aa).

Belongs to the GatB/GatE family. GatB subfamily. In terms of assembly, heterotrimer of A, B and C subunits.

The catalysed reaction is L-glutamyl-tRNA(Gln) + L-glutamine + ATP + H2O = L-glutaminyl-tRNA(Gln) + L-glutamate + ADP + phosphate + H(+). It carries out the reaction L-aspartyl-tRNA(Asn) + L-glutamine + ATP + H2O = L-asparaginyl-tRNA(Asn) + L-glutamate + ADP + phosphate + 2 H(+). Its function is as follows. Allows the formation of correctly charged Asn-tRNA(Asn) or Gln-tRNA(Gln) through the transamidation of misacylated Asp-tRNA(Asn) or Glu-tRNA(Gln) in organisms which lack either or both of asparaginyl-tRNA or glutaminyl-tRNA synthetases. The reaction takes place in the presence of glutamine and ATP through an activated phospho-Asp-tRNA(Asn) or phospho-Glu-tRNA(Gln). In Legionella pneumophila (strain Corby), this protein is Aspartyl/glutamyl-tRNA(Asn/Gln) amidotransferase subunit B.